We begin with the raw amino-acid sequence, 460 residues long: GTPase Der (460 aa).

EngA-type G domains are found at residues 3-167 and 189-364; these read FTFA…PEPD and IRVA…ATWN. GTP-binding positions include 9-16, 56-60, 119-122, 195-202, 242-246, and 307-310; these read GRPNVGKS, DTAGL, NKSE, GRPNAGKS, and NKWD. The KH-like domain maps to 365 to 449; sequence RRVPTAALNR…PVRIMLREKA (85 aa).

The protein belongs to the TRAFAC class TrmE-Era-EngA-EngB-Septin-like GTPase superfamily. EngA (Der) GTPase family. As to quaternary structure, associates with the 50S ribosomal subunit.

GTPase that plays an essential role in the late steps of ribosome biogenesis. The sequence is that of GTPase Der from Rhodopseudomonas palustris (strain BisA53).